The following is a 340-amino-acid chain: Glycerol-3-phosphate dehydrogenase [NAD(P)+] (340 aa).

Ser-15, Tyr-16, His-36, and Lys-110 together coordinate NADPH. Sn-glycerol 3-phosphate contacts are provided by Lys-110, Gly-139, and Thr-141. Ala-143 is a binding site for NADPH. 5 residues coordinate sn-glycerol 3-phosphate: Lys-195, Asp-248, Ser-258, Arg-259, and Asn-260. The Proton acceptor role is filled by Lys-195. Residue Arg-259 participates in NADPH binding. 2 residues coordinate NADPH: Val-283 and Glu-285.

It belongs to the NAD-dependent glycerol-3-phosphate dehydrogenase family.

It is found in the cytoplasm. The catalysed reaction is sn-glycerol 3-phosphate + NAD(+) = dihydroxyacetone phosphate + NADH + H(+). It carries out the reaction sn-glycerol 3-phosphate + NADP(+) = dihydroxyacetone phosphate + NADPH + H(+). The protein operates within membrane lipid metabolism; glycerophospholipid metabolism. In terms of biological role, catalyzes the reduction of the glycolytic intermediate dihydroxyacetone phosphate (DHAP) to sn-glycerol 3-phosphate (G3P), the key precursor for phospholipid synthesis. The protein is Glycerol-3-phosphate dehydrogenase [NAD(P)+] of Baumannia cicadellinicola subsp. Homalodisca coagulata.